Here is a 117-residue protein sequence, read N- to C-terminus: G antigen 5 (117 aa).

Positions 1–117 (MSWRGRSTYY…PEEGEKQSQC (117 aa)) are disordered. 2 stretches are compositionally biased toward acidic residues: residues 32-45 (FSDEVEPATPEEGE) and 87-96 (ECEDGPDGQE). Residues 103-117 (EEVKTPEEGEKQSQC) show a composition bias toward basic and acidic residues.

Belongs to the GAGE family. As to expression, expressed in a variety of tumor tissues but not in normal tissues, except testis.

The sequence is that of G antigen 5 (GAGE5) from Homo sapiens (Human).